A 521-amino-acid chain; its full sequence is Histone deacetylase HDAC1 (521 aa).

The interval 7-319 (KRVCYYYDSD…WTYETSVALA (313 aa)) is histone deacetylase. His139 is an active-site residue. Residues 376-521 (GVQIQAIPED…GAKGAKENNI (146 aa)) form a disordered region. Over residues 386 to 395 (AINDESDDED) the composition is skewed to acidic residues. Ser391 is modified (phosphoserine). A compositionally biased stretch (basic and acidic residues) spans 396–414 (KVDKDDRLPQSDKDKRIVP). 3 positions are modified to phosphoserine: Ser419, Ser421, and Ser455. Thr457 is modified (phosphothreonine). Residues 459 to 470 (SEIKDEKEKGDG) show a composition bias toward basic and acidic residues. The span at 476–502 (STASNTNSNNNSNNKSDNDAGATANAG) shows a compositional bias: low complexity. Over residues 503–513 (SGSGSGSGAGA) the composition is skewed to gly residues.

Belongs to the histone deacetylase family. HD type 1 subfamily. Component of a form of the Esc/E(z) complex present specifically during early embryogenesis which is composed of Caf1-55, esc, E(z), Su(z)12, Pcl and HDAC1. The Esc/E(z) complex may also associate with Pcl and HDAC1 during early embryogenesis. This complex is distinct from the PRC1 complex, which contains many other PcG proteins like Pc, Ph, Psc, Su(z)2. The 2 complexes however cooperate and interact together during the first 3 hours of development to establish PcG silencing. Interacts with the histone methyltransferase Su(var)3-9. Component of a complex that contains at least HDAC1, CoRest and Su(var)3-3/Hdm. Component of the DREAM complex at least composed of Myb, Caf1-55, mip40, mip120, mip130, E2f2, Dp, Rbf, Rbf2, lin-52, HDAC1 and l(3)mbt. Interacts with the chromatin-remodeler Mi-2. Interacts with Rrp6.

The protein resides in the nucleus. The catalysed reaction is N(6)-acetyl-L-lysyl-[histone] + H2O = L-lysyl-[histone] + acetate. In terms of biological role, catalyzes the deacetylation of lysine residues on the N-terminal part of the core histones (H2A, H2B, H3 and H4). Histone deacetylation may constitute a tag for epigenetic repression and plays an important role in transcriptional regulation, cell cycle progression and developmental events. For instance, deacetylation of histone H3 may be a prerequisite for the subsequent recruitment of the histone methyltransferase Su(var)3-9 to histones. Involved in position-effect variegation (PEV). In the larval brain, part of a regulatory network including the transcriptional repressors klu, dpn and E(spl)mgamma-HLH which is required for type II neuroblast self-renewal and for maintaining erm in an inactive state in intermediate neural progenitors (INP). This chain is Histone deacetylase HDAC1, found in Drosophila melanogaster (Fruit fly).